The chain runs to 114 residues: Large ribosomal subunit protein uL22c (114 aa).

This sequence belongs to the universal ribosomal protein uL22 family. Part of the 50S ribosomal subunit.

Its subcellular location is the plastid. It localises to the chloroplast. Functionally, this protein binds specifically to 23S rRNA. In terms of biological role, the globular domain of the protein is located near the polypeptide exit tunnel on the outside of the subunit, while an extended beta-hairpin is found that lines the wall of the exit tunnel in the center of the 70S ribosome. The chain is Large ribosomal subunit protein uL22c (rpl22) from Gracilaria tenuistipitata (Red alga).